Here is a 109-residue protein sequence, read N- to C-terminus: MKVLVLFSVLFLTLFSYSSTEAIDEFDSDAEDDMLSLMANEQVRAKACTPRLHDCSHDRHSCCRGELFKDVCYCFYPEGEDKTEVCSCQQPKSHKYIEKVVDKAKTVVG.

The first 22 residues, 1-22 (MKVLVLFSVLFLTLFSYSSTEA), serve as a signal peptide directing secretion. A propeptide spanning residues 23–44 (IDEFDSDAEDDMLSLMANEQVR) is cleaved from the precursor. Residues 45-88 (AKACTPRLHDCSHDRHSCCRGELFKDVCYCFYPEGEDKTEVCSC) are knottin domain. 4 disulfide bridges follow: cysteine 48–cysteine 63, cysteine 55–cysteine 72, cysteine 62–cysteine 88, and cysteine 74–cysteine 86. Residues 89–108 (QQPKSHKYIEKVVDKAKTVV) form a linear cationic cytotoxin domain region.

It belongs to the neurotoxin 19 (CSTX) family. 05 (U4-Lctx) subfamily. Expressed by the venom gland.

The protein localises to the secreted. Its function is as follows. Enhances the high-affinity desensitization of human P2RX3 purinoceptors. The chain is U4-lycotoxin-Ls1a from Lycosa singoriensis (Wolf spider).